Here is a 476-residue protein sequence, read N- to C-terminus: Glycogen synthase (476 aa).

ADP-alpha-D-glucose is bound at residue Lys-15.

Belongs to the glycosyltransferase 1 family. Bacterial/plant glycogen synthase subfamily.

The enzyme catalyses [(1-&gt;4)-alpha-D-glucosyl](n) + ADP-alpha-D-glucose = [(1-&gt;4)-alpha-D-glucosyl](n+1) + ADP + H(+). It functions in the pathway glycan biosynthesis; glycogen biosynthesis. In terms of biological role, synthesizes alpha-1,4-glucan chains using ADP-glucose. The protein is Glycogen synthase of Streptococcus gordonii (strain Challis / ATCC 35105 / BCRC 15272 / CH1 / DL1 / V288).